A 325-amino-acid chain; its full sequence is Glutarate 2-hydroxylase (325 aa).

Fe cation contacts are provided by His160, Asp162, and His292.

It belongs to the glutarate hydroxylase family. In terms of assembly, homotetramer. Fe(2+) serves as cofactor.

The enzyme catalyses glutarate + 2-oxoglutarate + O2 = (S)-2-hydroxyglutarate + succinate + CO2. It functions in the pathway amino-acid degradation. In terms of biological role, acts as an alpha-ketoglutarate-dependent dioxygenase catalyzing hydroxylation of glutarate (GA) to L-2-hydroxyglutarate (L2HG). Functions in a L-lysine degradation pathway that proceeds via cadaverine, glutarate and L-2-hydroxyglutarate. The chain is Glutarate 2-hydroxylase from Escherichia coli O6:K15:H31 (strain 536 / UPEC).